A 420-amino-acid polypeptide reads, in one-letter code: Sodium-dependent phosphate transport protein 4 (420 aa).

Residues 1-21 are disordered; sequence MATKTELSPTARESKNAQDMQ. Residues Asn49, Asn60, Asn68, and Asn77 are each glycosylated (N-linked (GlcNAc...) asparagine). The next 8 membrane-spanning stretches (helical) occupy residues 126–146, 154–174, 218–238, 256–276, 292–314, 319–341, 357–377, and 385–405; these read SIAL…GGFI, FVFY…FVVI, IWSI…MVVY, LLSA…GYLA, IATI…LNSG, TALL…INVL, GFSS…LSQD, and VFFL…IFGE.

It belongs to the major facilitator superfamily. Sodium/anion cotransporter family. As to expression, expressed in the liver and kidney. It is detected in proximal tubules in renal cortex as well as some tubules and glomeruli, with highest expression at the apical side of proximal tubules (at protein level).

It is found in the endoplasmic reticulum membrane. Its subcellular location is the cell membrane. It catalyses the reaction urate(in) + Na(+)(out) = urate(out) + Na(+)(in). Transports organic anions in a voltage-driven, multispecific, manner, on the apical side of renal proximal tubule. In particular, participates in the secretion of urate from the cell into the lumen. Urate is the end product of purine metabolism. May have roles in the metabolism and secretion of estrone sulfate, estradiol-17-beta-glucuronide, ochratoxin A, as wells as drugs such as bumetanide. The chain is Sodium-dependent phosphate transport protein 4 (SLC17A3) from Homo sapiens (Human).